Consider the following 372-residue polypeptide: Ligninase H2 (372 aa).

Positions 1–21 are cleaved as a signal peptide; that stretch reads MAFKQLLAALSVALTLQVTQA. Residues 22–28 constitute a propeptide that is removed on maturation; sequence APNLDKR. Disulfide bonds link Cys31-Cys44, Cys43-Cys314, Cys63-Cys149, and Cys278-Cys344. His76 acts as the Proton acceptor in catalysis. Residues Asp77, Gly95, Asp97, and Ser99 each coordinate Ca(2+). His205 is a binding site for heme b. Ca(2+)-binding residues include Ser206, Asp223, Thr225, Gln228, and Asp230. Asn286 carries an N-linked (GlcNAc...) asparagine glycan.

Belongs to the peroxidase family. Ligninase subfamily. Heme b is required as a cofactor. It depends on Ca(2+) as a cofactor.

The enzyme catalyses 1-(3,4-dimethoxyphenyl)-2-(2-methoxyphenoxy)propane-1,3-diol + H2O2 = 3,4-dimethoxybenzaldehyde + guaiacol + glycolaldehyde + H2O. It catalyses the reaction 2 (3,4-dimethoxyphenyl)methanol + H2O2 = 2 (3,4-dimethoxyphenyl)methanol radical + 2 H2O. Its pathway is secondary metabolite metabolism; lignin degradation. Functionally, depolymerization of lignin. Catalyzes the C(alpha)-C(beta) cleavage of the propyl side chains of lignin. In Phanerodontia chrysosporium (White-rot fungus), this protein is Ligninase H2 (GLG4).